Here is a 145-residue protein sequence, read N- to C-terminus: Hemoglobin subunit beta-2 (145 aa).

The Globin domain maps to His2 to Tyr145. Residues His63 and His92 each contribute to the heme b site.

It belongs to the globin family. In terms of assembly, minor hemoglobin is a tetramer of two alpha-2 chains and two beta-2 chains. In terms of tissue distribution, red blood cells.

Functionally, involved in oxygen transport from the lung to the various peripheral tissues. In Triturus cristatus (Great crested newt), this protein is Hemoglobin subunit beta-2 (HBB2).